The primary structure comprises 1436 residues: DNA polymerase III PolC-type (1436 aa).

In terms of domain architecture, Exonuclease spans 420–576 (YVVFDVETTG…YDTEATAYIF (157 aa)).

Belongs to the DNA polymerase type-C family. PolC subfamily.

Its subcellular location is the cytoplasm. It catalyses the reaction DNA(n) + a 2'-deoxyribonucleoside 5'-triphosphate = DNA(n+1) + diphosphate. Functionally, required for replicative DNA synthesis. This DNA polymerase also exhibits 3' to 5' exonuclease activity. In Staphylococcus aureus (strain MW2), this protein is DNA polymerase III PolC-type.